We begin with the raw amino-acid sequence, 1293 residues long: MEIIRGAPALSAFRVQQLMKACDAAAIPVRHIYAEFMHFAHLTNALNDTQTLQLASILTYGPAIEAHTPKGQLYLVTPRPGTISPWSSKATDIAHNCGLSQIKRLERGIAYYVEADTLDASQQKALQALLYDRMVEVIFDDMAAAETLFDRTEPKALASVNVLGEGRRALEVANSRLGLALAEDEIDYLVDNFVRLKRNPNDIELMMFAQANSEHCRHKIFNADWTIDGVVQDKSLFKMIKNTYAVTPDNVLSAYKDNAAVMTGSVAGRFFPDETGVYAYHVEPCHILMKVETHNHPTAISPYAGAATGSGGEIRDEGATGRGSKPKAGLVGFSVSNLNIPGFIQPWEAQYGKPERIVTPLEIMLEGPLGGAAFNNEFGRPALVGYFRTYEQEVSSHNGVEVRGYHKPIMLAGGLGNIREDHVQKGEITVGAKLIVLGGPAMNIGLGGGAASSMASGQSSEDLDFASVQRENPEMERRCQEVIDRCWQLGDDNPIQFIHDVGAGGLSNAFPELVNDADRGGRFNLRNVPSDEPGMSPLEIWCNESQERYVLSVAPENLARFEQICLRERAPFAVVGEATSEQHLTLADSHFNNKPIDLPLEVLLGKAPKMSRDVVSKKALSPALDESQITVDEAVTRILSLPTVADKSFLITIGDRSVTGLVNRDQMVGPWQVPVADCAVTAASFDTYAGEAMSIGERTPLALLDFGASARMAVAESIMNIAGTDIGSFKRIKLSANWMSAAGHPGEDAGLYEAVKAVGEELCPQLEITIPVGKDSMSMKTAWEDNGVHKSVTSPMSLVITAFGVVQDIRNTVTPELRSDKGDTALLLLDLSHGKTRLGGSCLAQVFSSLGDVAPDLDDSTTLKGFFEVMQTLVADQSILAYHDRSDGGLFTTVTEMAFAGNTGAEIDLSALQGSDLARLFNEELGAVIQVSQAQAEAITAQFIAAGVACHAIGGLTEHNKLVVKDGSRVVFQQQRSELRRLWSQTSYKMQALRDNPDCALEEFSLKQSETDPGLTVKLNFDPSQDVAAPYILKGIAPKMAILREQGVNSHVEMAAAFDRAGFESRDVHMSDILSGRISLDEFQGLVACGGFSYGDVLGAGEGWAKSILFNQRARDEFSRFFERDLSFALGVCNGCQMLSNLKEIIPGSEHWPRFVRNRSERFEARVSLVEVQQSPSLFFEGMAGSRMPIAVSHGEGLAEFASMQAMTAAESTGTVALRYVTGTGEIATQYPQNPNGSPNGLSGICSTDGKVTIMMPHPERVFRTVANSWHPDNWGEDSPWMRMFRNARVKLG.

ATP is bound by residues 305–316 (GAATGSGGEIRD) and Ala-676. Residues Asp-677, Glu-716, Asn-720, and Asp-884 each contribute to the Mg(2+) site. Residue Ser-886 coordinates ATP. Positions 1040–1293 (MAILREQGVN…MFRNARVKLG (254 aa)) constitute a Glutamine amidotransferase type-1 domain. The active-site Nucleophile is the Cys-1133. Residues His-1258 and Glu-1260 contribute to the active site.

It in the N-terminal section; belongs to the FGAMS family. In terms of assembly, monomer.

Its subcellular location is the cytoplasm. The enzyme catalyses N(2)-formyl-N(1)-(5-phospho-beta-D-ribosyl)glycinamide + L-glutamine + ATP + H2O = 2-formamido-N(1)-(5-O-phospho-beta-D-ribosyl)acetamidine + L-glutamate + ADP + phosphate + H(+). It functions in the pathway purine metabolism; IMP biosynthesis via de novo pathway; 5-amino-1-(5-phospho-D-ribosyl)imidazole from N(2)-formyl-N(1)-(5-phospho-D-ribosyl)glycinamide: step 1/2. Its function is as follows. Phosphoribosylformylglycinamidine synthase involved in the purines biosynthetic pathway. Catalyzes the ATP-dependent conversion of formylglycinamide ribonucleotide (FGAR) and glutamine to yield formylglycinamidine ribonucleotide (FGAM) and glutamate. This Shewanella denitrificans (strain OS217 / ATCC BAA-1090 / DSM 15013) protein is Phosphoribosylformylglycinamidine synthase.